Consider the following 328-residue polypeptide: Arabinose 5-phosphate isomerase KdsD (328 aa).

The SIS domain occupies 42 to 184 (CEKMFWCKGK…AVALLKARGF (143 aa)). Substrate contacts are provided by residues 75–76 (GT), H82, H88, 114–123 (ALIPVLKRLH), 148–150 (KVA), T222, and D275. H82 contributes to the Zn(2+) binding site. Positions 210 to 268 (MHTGDEIPHVKKTASLRDALLEVTRKNLGMTVICDDNMMIEGIFTDGDLRRVFDMGVDV) constitute a CBS 1 domain. The CBS 2 domain occupies 277-328 (MTPGGIRVRPGILAVEALNLMQSRHITSVMVADGDHLLGVLHMHDLLRAGVV).

This sequence belongs to the SIS family. GutQ/KpsF subfamily. As to quaternary structure, homotetramer.

The enzyme catalyses D-arabinose 5-phosphate = D-ribulose 5-phosphate. It functions in the pathway carbohydrate biosynthesis; 3-deoxy-D-manno-octulosonate biosynthesis; 3-deoxy-D-manno-octulosonate from D-ribulose 5-phosphate: step 1/3. The protein operates within bacterial outer membrane biogenesis; lipopolysaccharide biosynthesis. In terms of biological role, involved in the biosynthesis of 3-deoxy-D-manno-octulosonate (KDO), a unique 8-carbon sugar component of lipopolysaccharides (LPSs). Catalyzes the reversible aldol-ketol isomerization between D-ribulose 5-phosphate (Ru5P) and D-arabinose 5-phosphate (A5P). The protein is Arabinose 5-phosphate isomerase KdsD (kdsD) of Escherichia coli O6:H1 (strain CFT073 / ATCC 700928 / UPEC).